We begin with the raw amino-acid sequence, 264 residues long: uncharacterized protein (264 aa).

The next 3 helical transmembrane spans lie at Leu48–Phe68, Ile112–Ala132, and Leu142–Ile162. Ser260 is subject to Phosphoserine.

It is found in the membrane. This is an uncharacterized protein from Schizosaccharomyces pombe (strain 972 / ATCC 24843) (Fission yeast).